The following is a 323-amino-acid chain: MGEEVQMSDYDVSGDGDRVSEWEMGLPSDEDLASLSYSLIPPNLAMAFSITPERSRTIQDVNRASETTLSSLRGGSSGPNTSSSNNNVEEEDRVGSSSPGSDSKKQKTSNGDGDDGGGVDPDSAMAAEEGDSGTEDLSGKTLKRPRLVWTPQLHKRFVDVVAHLGIKNAVPKTIMQLMNVEGLTRENVASHLQKYRLYLKRMQGLTNEGPSASDKLFSSTPVPPQSFQDIGGGGGSSGNVGVPIPGAYGTQQMMQMPVYAHHMGMQGYHHQNHNHDPYHQNHRHHHGAGGNGAFESNPYMMQQNKFGSMASYPSVGGGSANEN.

Disordered regions lie at residues 1 to 25, 53 to 139, and 267 to 298; these read MGEE…WEMG, ERSR…DLSG, and GYHH…ESNP. Low complexity predominate over residues 65–87; the sequence is SETTLSSLRGGSSGPNTSSSNNN. The segment at residues 139–200 is a DNA-binding region (myb-like GARP); the sequence is GKTLKRPRLV…HLQKYRLYLK (62 aa).

Interacts with ELF3 and forms a complex with ELF3 and ELF4.

It localises to the nucleus. Functionally, transcription factor that is essential for the generation of the circadian clock oscillation. Is necessary for activation of CCA1 and LHY expression. Is coregulated with TOC1 and seems to be repressed by CCA1 and LHY by direct binding of these proteins to the evening element in the LUX promoter. Directly regulates the expression of PRR9, a major component of the morning transcriptional feedback circuit, by binding specific sites on PRR9 promoter. Binds to its own promoter, inducing a negative auto-regulatory feedback loop within the core clock. Binds to ELF3 and associates with ELF4 in a diurnal complex which is required for the expression of the growth-promoting transcription factors PIF4 and PIF5 and subsequent hypocotyl growth in the early evening. This Arabidopsis thaliana (Mouse-ear cress) protein is Transcription factor LUX (LUX).